The chain runs to 249 residues: Indole-3-glycerol phosphate synthase (249 aa).

It belongs to the TrpC family.

It carries out the reaction 1-(2-carboxyphenylamino)-1-deoxy-D-ribulose 5-phosphate + H(+) = (1S,2R)-1-C-(indol-3-yl)glycerol 3-phosphate + CO2 + H2O. The protein operates within amino-acid biosynthesis; L-tryptophan biosynthesis; L-tryptophan from chorismate: step 4/5. The polypeptide is Indole-3-glycerol phosphate synthase (Pyrobaculum neutrophilum (strain DSM 2338 / JCM 9278 / NBRC 100436 / V24Sta) (Thermoproteus neutrophilus)).